Consider the following 271-residue polypeptide: Mannosyl-3-phosphoglycerate phosphatase (271 aa).

The active-site Nucleophile is Asp-13. Positions 13, 15, and 214 each coordinate Mg(2+).

This sequence belongs to the HAD-like hydrolase superfamily. MPGP family. It depends on Mg(2+) as a cofactor.

Its subcellular location is the cytoplasm. The catalysed reaction is 2-O-(alpha-D-mannosyl)-3-phosphoglycerate + H2O = (2R)-2-O-(alpha-D-mannosyl)-glycerate + phosphate. The polypeptide is Mannosyl-3-phosphoglycerate phosphatase (Escherichia coli (strain SE11)).